The chain runs to 383 residues: Insulinoma-associated protein 1a (383 aa).

An SNAG domain region spans residues 1 to 20 (MPRGFLVKRNKKATPVSYRV). Disordered regions lie at residues 99-141 (PVDL…AMRK) and 229-269 (RWHK…SEDG). Over residues 105-120 (GTSNSNRTGTTVTTKR) the composition is skewed to polar residues. A compositionally biased stretch (basic residues) spans 130–140 (KPASKKAKAMR). A C2H2-type 1 zinc finger spans residues 209–231 (YRCPECDKLFSCPANLASHRRWH). Residues 244 to 256 (APEKEETSSDRDT) show a composition bias toward basic and acidic residues. A C2H2-type 2; degenerate zinc finger spans residues 271–295 (YDCQHCGKKFKRQAYLKKHVTAHHD). 2 consecutive C2H2-type zinc fingers follow at residues 314–337 (HLCP…RLQH) and 342–365 (YPCK…NKCH).

The protein belongs to the INSM1 family.

It is found in the nucleus. Its function is as follows. May act as a transcriptional regulator. May play a role in neurogenesis and neuroendocrine cell differentiation during embryonic development. The polypeptide is Insulinoma-associated protein 1a (insm1a) (Danio rerio (Zebrafish)).